The following is a 313-amino-acid chain: Ribosomal RNA small subunit methyltransferase H (313 aa).

S-adenosyl-L-methionine contacts are provided by residues 31-33 (GGH), Asp51, Phe77, Asp95, and Gln102.

The protein belongs to the methyltransferase superfamily. RsmH family.

The protein localises to the cytoplasm. The enzyme catalyses cytidine(1402) in 16S rRNA + S-adenosyl-L-methionine = N(4)-methylcytidine(1402) in 16S rRNA + S-adenosyl-L-homocysteine + H(+). Its function is as follows. Specifically methylates the N4 position of cytidine in position 1402 (C1402) of 16S rRNA. The chain is Ribosomal RNA small subunit methyltransferase H from Xylella fastidiosa (strain M12).